A 127-amino-acid polypeptide reads, in one-letter code: Large-conductance mechanosensitive channel (127 aa).

3 consecutive transmembrane segments (helical) span residues 8-28 (FAFKGNVLDLAIGVIIGAAFG), 30-50 (IVTALVDVVIMPIISIILSLI), and 70-90 (IGVLIKTIIEFLIIAFVLFLF).

This sequence belongs to the MscL family. As to quaternary structure, homopentamer.

The protein resides in the cell membrane. Channel that opens in response to stretch forces in the membrane lipid bilayer. May participate in the regulation of osmotic pressure changes within the cell. The protein is Large-conductance mechanosensitive channel of Herpetosiphon aurantiacus (strain ATCC 23779 / DSM 785 / 114-95).